The primary structure comprises 524 residues: Coatomer subunit delta-1 (524 aa).

Residues 215 to 244 (MDMDSFASKPKGGRPSAAATAPGKGLGMKL) form a disordered region. The 242-residue stretch at 283–524 (SDPVTVTIEE…RLVAANYQVV (242 aa)) folds into the MHD domain.

This sequence belongs to the adaptor complexes medium subunit family. Delta-COP subfamily. As to quaternary structure, oligomeric complex that consists of at least the alpha, beta, beta', gamma, delta, epsilon and zeta subunits.

It localises to the cytoplasm. Its subcellular location is the golgi apparatus membrane. It is found in the cytoplasmic vesicle. The protein resides in the COPI-coated vesicle membrane. In terms of biological role, the coatomer is a cytosolic protein complex that binds to dilysine motifs and reversibly associates with Golgi non-clathrin-coated vesicles, which further mediate biosynthetic protein transport from the ER, via the Golgi up to the trans Golgi network. Coatomer complex is required for budding from Golgi membranes, and is essential for the retrograde Golgi-to-ER transport of dilysine-tagged proteins. This Oryza sativa subsp. japonica (Rice) protein is Coatomer subunit delta-1.